The chain runs to 656 residues: Receptor-type tyrosine-protein phosphatase R (656 aa).

Residues 1–23 (MRRAVGFPALCLLLNLHAAGCFS) form the signal peptide. Ser-23 carries an O-linked (Xyl...) (chondroitin sulfate) serine glycan. Residues 25–225 (NNDHFLAIRQ…HEADKIWSKE (201 aa)) are Extracellular-facing. The N-linked (GlcNAc...) asparagine glycan is linked to Asn-128. The chain crosses the membrane as a helical span at residues 226 to 248 (GFYAVVIFLSIFIIIVTCLMIIY). Topologically, residues 249–656 (RLKERLQLSF…ESRLSPETVQ (408 aa)) are cytoplasmic. Residue Ser-271 is modified to Phosphoserine. At Ser-338 the chain carries Phosphoserine; by PKA. Residues 392–646 (LQSEFMEIPM…EFVHHALCLF (255 aa)) form the Tyrosine-protein phosphatase domain. Substrate is bound by residues Asp-553, 587–593 (CSAGIGR), and Gln-631. Cys-587 functions as the Phosphocysteine intermediate in the catalytic mechanism.

It belongs to the protein-tyrosine phosphatase family. Receptor class 7 subfamily. Interacts with MAPKs. Widely expressed in the brain, most abundant in cerebellum, midbrain, cerebral cortex and hippocampus. Also expressed in heart and skeletal muscle.

It is found in the cytoplasm. The protein resides in the cell membrane. The catalysed reaction is O-phospho-L-tyrosyl-[protein] + H2O = L-tyrosyl-[protein] + phosphate. Sequesters mitogen-activated protein kinases (MAPKs) such as MAPK1, MAPK3 and MAPK14 in the cytoplasm in an inactive form. The MAPKs bind to a dephosphorylated kinase interacting motif, phosphorylation of which by the protein kinase A complex releases the MAPKs for activation and translocation into the nucleus. The sequence is that of Receptor-type tyrosine-protein phosphatase R (Ptprr) from Rattus norvegicus (Rat).